We begin with the raw amino-acid sequence, 455 residues long: Ribulose bisphosphate carboxylase large chain (455 aa).

Lys5 is subject to N6,N6,N6-trimethyllysine. Residues Asn114 and Thr164 each contribute to the substrate site. The active-site Proton acceptor is the Lys166. Lys168 provides a ligand contact to substrate. Lys192, Asp194, and Glu195 together coordinate Mg(2+). At Lys192 the chain carries N6-carboxylysine. The active-site Proton acceptor is His285. Arg286, His318, and Ser370 together coordinate substrate.

It belongs to the RuBisCO large chain family. Type I subfamily. As to quaternary structure, heterohexadecamer of 8 large chains and 8 small chains; disulfide-linked. The disulfide link is formed within the large subunit homodimers. Mg(2+) is required as a cofactor. In terms of processing, the disulfide bond which can form in the large chain dimeric partners within the hexadecamer appears to be associated with oxidative stress and protein turnover.

The protein resides in the plastid. It is found in the chloroplast. It catalyses the reaction 2 (2R)-3-phosphoglycerate + 2 H(+) = D-ribulose 1,5-bisphosphate + CO2 + H2O. It carries out the reaction D-ribulose 1,5-bisphosphate + O2 = 2-phosphoglycolate + (2R)-3-phosphoglycerate + 2 H(+). RuBisCO catalyzes two reactions: the carboxylation of D-ribulose 1,5-bisphosphate, the primary event in carbon dioxide fixation, as well as the oxidative fragmentation of the pentose substrate in the photorespiration process. Both reactions occur simultaneously and in competition at the same active site. In Lupinus luteus (European yellow lupine), this protein is Ribulose bisphosphate carboxylase large chain.